The sequence spans 703 residues: Protein FAR1-RELATED SEQUENCE 6 (703 aa).

The segment at 1–29 (MERSESVDEDVQASAYLENDEVRERDDPM) is disordered. Residues 99 to 184 (NYYNCYASEV…TLDHNHLLGC (86 aa)) form the FAR1 domain. In terms of domain architecture, MULE spans 297–392 (VIFIDSSYIS…SLTHIMRKIP (96 aa)). An SWIM-type zinc finger spans residues 584–620 (FEVLYNRSVGEVRCICSCFNFYGYLCRHALCVLNFNG).

Belongs to the FHY3/FAR1 family. Expressed in hypocotyls, rosette and cauline leaves, inflorescences stems, flowers and siliques.

Its subcellular location is the nucleus. In terms of biological role, putative transcription activator involved in regulating light control of development. May have a role in controlling flowering time. The chain is Protein FAR1-RELATED SEQUENCE 6 (FRS6) from Arabidopsis thaliana (Mouse-ear cress).